The chain runs to 552 residues: Serine protease 53 (552 aa).

Residues 1-23 (MRQSWRPELLIVGAVVVIEGLQA) form the signal peptide. Peptidase S1 domains lie at 24–273 (AQRA…AHVH) and 294–525 (VACG…NLDW). A disordered region spans residues 27–46 (ACGQRGPGPPEPQEGNTLPG). The cysteines at positions 62 and 78 are disulfide-linked. Active-site charge relay system residues include His77 and Asp128. 4 disulfides stabilise this stretch: Cys158-Cys230, Cys187-Cys209, Cys220-Cys249, and Cys326-Cys342. Catalysis depends on charge relay system residues Ser224, His341, and Asp382. Intrachain disulfides connect Cys443–Cys463 and Cys473–Cys501. Catalysis depends on Ser477, which acts as the Charge relay system.

The protein belongs to the peptidase S1 family.

It localises to the secreted. Functionally, in vitro can degrade the fibrinogen alpha chain of as well as pro-urokinase-type plasminogen activator. The protein is Serine protease 53 (Prss53) of Mus musculus (Mouse).